An 890-amino-acid chain; its full sequence is Translation initiation factor IF-2 (890 aa).

The disordered stretch occupies residues 45 to 304 (LIDHLNQKNS…LQQGFQKPAQ (260 aa)). The span at 67 to 81 (STLNIPGTGGKSKSV) shows a compositional bias: polar residues. Residues 92 to 217 (VKRDPQEAER…RMAEENKWTD (126 aa)) are compositionally biased toward basic and acidic residues. The span at 252–266 (GRGRNAKAARPKKGN) shows a compositional bias: basic residues. The span at 267 to 280 (KHAESKADREEARA) shows a compositional bias: basic and acidic residues. The region spanning 389 to 558 (PRAPVVTIMG…LLQAEVLELK (170 aa)) is the tr-type G domain. Residues 398–405 (GHVDHGKT) are G1. GTP is bound at residue 398–405 (GHVDHGKT). The tract at residues 423–427 (GITQH) is G2. Residues 444–447 (DTPG) form a G3 region. GTP is bound by residues 444 to 448 (DTPGH) and 498 to 501 (NKID). The G4 stretch occupies residues 498–501 (NKID). Positions 534 to 536 (SAK) are G5. The residue at position 808 (Lys808) is an N6-acetyllysine.

This sequence belongs to the TRAFAC class translation factor GTPase superfamily. Classic translation factor GTPase family. IF-2 subfamily.

It localises to the cytoplasm. In terms of biological role, one of the essential components for the initiation of protein synthesis. Protects formylmethionyl-tRNA from spontaneous hydrolysis and promotes its binding to the 30S ribosomal subunits. Also involved in the hydrolysis of GTP during the formation of the 70S ribosomal complex. This Escherichia coli (strain 55989 / EAEC) protein is Translation initiation factor IF-2.